We begin with the raw amino-acid sequence, 159 residues long: Peripheral myelin protein 22 (159 aa).

Position 1 (Met1) is a topological domain, cytoplasmic. A helical membrane pass occupies residues 2 to 31; sequence LLLLLGIIVLHVAVLVLLFVATIVSQWIVG. Topologically, residues 32-64 are extracellular; it reads NGHATDLWQNCSTTSGNVQHCLSSSANEWLQSV. Residue Asn41 is glycosylated (N-linked (GlcNAc...) asparagine). Residues 65-91 traverse the membrane as a helical segment; the sequence is QATMILSIIFSVLSLFLFFCQLFTLTK. Residues 92–95 lie on the Cytoplasmic side of the membrane; that stretch reads GGRF. A helical membrane pass occupies residues 96–119; the sequence is YITGIFQILAGLCVMSAASIYTVR. Over 120–133 the chain is Extracellular; sequence HPEWHLDSAYSYGF. Residues 134–156 traverse the membrane as a helical segment; sequence AYILAWVAFPLALLSGVVYVILR. At 157 to 159 the chain is on the cytoplasmic side; that stretch reads KRE.

The protein belongs to the PMP-22/EMP/MP20 family. Ubiquitinated by the DCX(DCAF13) E3 ubiquitin ligase complex, leading to its degradation.

The protein resides in the cell membrane. In terms of biological role, might be involved in growth regulation, and in myelinization in the peripheral nervous system. This is Peripheral myelin protein 22 (PMP22) from Equus caballus (Horse).